The primary structure comprises 603 residues: Serine/threonine-protein kinase PLK1 (603 aa).

A disordered region spans residues 1–35; the sequence is MSAAVTAGKLARAPADPGKAGVPGVAAPGAPAAAP. An N-acetylserine modification is found at S2. T6 is modified (phosphothreonine). The segment covering 13–35 has biased composition (low complexity); sequence APADPGKAGVPGVAAPGAPAAAP. A Glycyl lysine isopeptide (Lys-Gly) (interchain with G-Cter in ubiquitin) cross-link involves residue K19. The Protein kinase domain occupies 53-305; sequence YVRGRFLGKG…INELLNDEFF (253 aa). ATP is bound by residues 59 to 67 and K82; that span reads LGKGGFAKC. S103 carries the phosphoserine modification. E131 is a binding site for ATP. S137 is subject to Phosphoserine. D176 acts as the Proton acceptor in catalysis. Residues 178-181 and D194 each bind ATP; that span reads KLGN. An activation loop region spans residues 194–221; the sequence is DFGLATKVEYDGERKKTLCGTPNYIAPE. A Phosphothreonine; by AURKA modification is found at T210. A Phosphothreonine modification is found at T214. At S269 the chain carries Phosphoserine; by autocatalysis. S335 carries the post-translational modification Phosphoserine. A D-box that targets the protein for proteasomal degradation in anaphase motif is present at residues 337–340; the sequence is RKPL. A Glycyl lysine isopeptide (Lys-Gly) (interchain with G-Cter in SUMO2) cross-link involves residue K338. The disordered stretch occupies residues 338–364; it reads KPLTVLNKGLENPLPERPREKEEPVVR. Residues 351–364 are compositionally biased toward basic and acidic residues; sequence LPERPREKEEPVVR. Residues S375 and S450 each carry the phosphoserine modification. Positions 410-488 constitute a POLO box 1 domain; the sequence is WVSKWVDYSD…LKYFRNYMSE (79 aa). Residue K492 forms a Glycyl lysine isopeptide (Lys-Gly) (interchain with G-Cter in ubiquitin) linkage. Residues 493–507 are linker; that stretch reads AGANITPREGDELAR. Residue T498 is modified to Phosphothreonine. The POLO box 2 domain occupies 510-592; it reads YLRTWFRTRS…ARTMVDKLLS (83 aa). The interval 538–540 is important for interaction with phosphorylated proteins; that stretch reads HTK.

It belongs to the protein kinase superfamily. Ser/Thr protein kinase family. CDC5/Polo subfamily. As to quaternary structure, interacts with CEP170. Interacts with EVI5. Interacts with FAM29A. Interacts with SLX4/BTBD12. Interacts with TTDN1. Interacts (via POLO-box domain) with the phosphorylated form of BUB1, CDC25C and CENPU. Interacts with KIF2A. Interacts with CYLD. Part of an astrin (SPAG5)-kinastrin (SKAP) complex containing KNSTRN, SPAG5, PLK1, DYNLL1 and SGO2. Interacts with BIRC6/bruce. Interacts with CDK1-phosphorylated FRY; this interaction occurs in mitotic cells, but not in interphase cells. FRY interaction facilitates AURKA-mediated PLK1 phosphorylation. Interacts with CDK1-phosphorylated DCTN6 during mitotic prometaphase; the interaction facilitates recruitment to kinetochores. Interacts with CEP68; the interaction phosphorylates CEP68. Interacts (via POLO-box domain) with DCTN1. Interacts with CEP20 in later G1, S, G2 and M phases of the cell cycle; this interaction recruits PLK1 to centrosomes, a step required for S phase progression. Interacts with KLHL22. Interacts (via POLO box domains) with NEDD9/HEF1 (via C-terminus). Interacts with FIRRM (via N-terminus region); required for maintaining, but not activating, PLK1 kinase activity. Interacts with FZR1. Interacts with SKA3; the interaction promotes the stability of PLK1; the interaction promotes the stability of PLK1. Interacts with the MTMR3:MTMR4 heterooligomer; brings CEP55 and PLK1 together during early mitosis, regulating the phosphorylation of CEP55 by PLK1 and its recruitment to the midbody where it can mediate cell abscission. Post-translationally, catalytic activity is enhanced by phosphorylation of Thr-210. Phosphorylation at Thr-210 is first detected on centrosomes in the G2 phase of the cell cycle, peaks in prometaphase and gradually disappears from centrosomes during anaphase. Dephosphorylation at Thr-210 at centrosomes is probably mediated by protein phosphatase 1C (PP1C), via interaction with PPP1R12A/MYPT1. Autophosphorylation and phosphorylation of Ser-137 may not be significant for the activation of PLK1 during mitosis, but may enhance catalytic activity during recovery after DNA damage checkpoint. Phosphorylated in vitro by STK10. Ubiquitinated by the anaphase promoting complex/cyclosome (APC/C) in anaphase and following DNA damage, leading to its degradation by the proteasome. Ubiquitination is mediated via its interaction with FZR1/CDH1. Ubiquitination and subsequent degradation prevents entry into mitosis and is essential to maintain an efficient G2 DNA damage checkpoint. Monoubiquitination at Lys-492 by the BCR(KLHL22) ubiquitin ligase complex does not lead to degradation: it promotes PLK1 dissociation from phosphoreceptor proteins and subsequent removal from kinetochores, allowing silencing of the spindle assembly checkpoint (SAC) and chromosome segregation. In terms of tissue distribution, placenta and colon.

It is found in the nucleus. It localises to the chromosome. Its subcellular location is the centromere. The protein localises to the kinetochore. The protein resides in the cytoplasm. It is found in the cytoskeleton. It localises to the microtubule organizing center. Its subcellular location is the centrosome. The protein localises to the spindle. The protein resides in the midbody. It carries out the reaction L-seryl-[protein] + ATP = O-phospho-L-seryl-[protein] + ADP + H(+). The catalysed reaction is L-threonyl-[protein] + ATP = O-phospho-L-threonyl-[protein] + ADP + H(+). With respect to regulation, activated by phosphorylation of Thr-210 by AURKA; phosphorylation by AURKA is enhanced by BORA. Once activated, activity is stimulated by binding target proteins. Binding of target proteins has no effect on the non-activated kinase. Several inhibitors targeting PLKs are currently in development and are under investigation in a growing number of clinical trials, such as BI 2536, an ATP-competitive PLK1 inhibitor or BI 6727, a dihydropteridinone that specifically inhibits the catalytic activity of PLK1. In terms of biological role, serine/threonine-protein kinase that performs several important functions throughout M phase of the cell cycle, including the regulation of centrosome maturation and spindle assembly, the removal of cohesins from chromosome arms, the inactivation of anaphase-promoting complex/cyclosome (APC/C) inhibitors, and the regulation of mitotic exit and cytokinesis. Polo-like kinase proteins act by binding and phosphorylating proteins that are already phosphorylated on a specific motif recognized by the POLO box domains. Phosphorylates BORA, BUB1B/BUBR1, CCNB1, CDC25C, CEP55, ECT2, ERCC6L, FBXO5/EMI1, FOXM1, KIF20A/MKLP2, CENPU, NEDD1, NINL, NPM1, NUDC, PKMYT1/MYT1, KIZ, MRE11, PPP1R12A/MYPT1, POLQ, PRC1, RACGAP1/CYK4, RAD51, RHNO1, SGO1, STAG2/SA2, TEX14, TOPORS, p73/TP73, TPT1, WEE1 and HNRNPU. Plays a key role in centrosome functions and the assembly of bipolar spindles by phosphorylating KIZ, NEDD1 and NINL. NEDD1 phosphorylation promotes subsequent targeting of the gamma-tubulin ring complex (gTuRC) to the centrosome, an important step for spindle formation. Phosphorylation of NINL component of the centrosome leads to NINL dissociation from other centrosomal proteins. Involved in mitosis exit and cytokinesis by phosphorylating CEP55, ECT2, KIF20A/MKLP2, CENPU, PRC1 and RACGAP1. Recruited at the central spindle by phosphorylating and docking PRC1 and KIF20A/MKLP2; creates its own docking sites on PRC1 and KIF20A/MKLP2 by mediating phosphorylation of sites subsequently recognized by the POLO box domains. Phosphorylates RACGAP1, thereby creating a docking site for the Rho GTP exchange factor ECT2 that is essential for the cleavage furrow formation. Promotes the central spindle recruitment of ECT2. Plays a central role in G2/M transition of mitotic cell cycle by phosphorylating CCNB1, CDC25C, FOXM1, CENPU, PKMYT1/MYT1, PPP1R12A/MYPT1 and WEE1. Part of a regulatory circuit that promotes the activation of CDK1 by phosphorylating the positive regulator CDC25C and inhibiting the negative regulators WEE1 and PKMYT1/MYT1. Also acts by mediating phosphorylation of cyclin-B1 (CCNB1) on centrosomes in prophase. Phosphorylates FOXM1, a key mitotic transcription regulator, leading to enhance FOXM1 transcriptional activity. Involved in kinetochore functions and sister chromatid cohesion by phosphorylating BUB1B/BUBR1, FBXO5/EMI1 and STAG2/SA2. PLK1 is high on non-attached kinetochores suggesting a role of PLK1 in kinetochore attachment or in spindle assembly checkpoint (SAC) regulation. Required for kinetochore localization of BUB1B. Regulates the dissociation of cohesin from chromosomes by phosphorylating cohesin subunits such as STAG2/SA2. Phosphorylates SGO1: required for spindle pole localization of isoform 3 of SGO1 and plays a role in regulating its centriole cohesion function. Mediates phosphorylation of FBXO5/EMI1, a negative regulator of the APC/C complex during prophase, leading to FBXO5/EMI1 ubiquitination and degradation by the proteasome. Acts as a negative regulator of p53 family members: phosphorylates TOPORS, leading to inhibit the sumoylation of p53/TP53 and simultaneously enhance the ubiquitination and subsequent degradation of p53/TP53. Phosphorylates the transactivation domain of the transcription factor p73/TP73, leading to inhibit p73/TP73-mediated transcriptional activation and pro-apoptotic functions. Phosphorylates BORA, and thereby promotes the degradation of BORA. Contributes to the regulation of AURKA function. Also required for recovery after DNA damage checkpoint and entry into mitosis. Phosphorylates MISP, leading to stabilization of cortical and astral microtubule attachments required for proper spindle positioning. Together with MEIKIN, acts as a regulator of kinetochore function during meiosis I: required both for mono-orientation of kinetochores on sister chromosomes and protection of centromeric cohesin from separase-mediated cleavage. Phosphorylates CEP68 and is required for its degradation. Regulates nuclear envelope breakdown during prophase by phosphorylating DCTN1 resulting in its localization in the nuclear envelope. Phosphorylates the heat shock transcription factor HSF1, promoting HSF1 nuclear translocation upon heat shock. Phosphorylates HSF1 also in the early mitotic period; this phosphorylation regulates HSF1 localization to the spindle pole, the recruitment of the SCF(BTRC) ubiquitin ligase complex induicing HSF1 degradation, and hence mitotic progression. Regulates mitotic progression by phosphorylating RIOK2. Through the phosphorylation of DZIP1 regulates the localization during mitosis of the BBSome, a ciliary protein complex involved in cilium biogenesis. Regulates DNA repair during mitosis by mediating phosphorylation of POLQ and RHNO1, thereby promoting POLQ recruitment to DNA damage sites. Phosphorylates ATXN10 which may play a role in the regulation of cytokinesis and may stimulate the proteasome-mediated degradation of ATXN10. This chain is Serine/threonine-protein kinase PLK1 (PLK1), found in Homo sapiens (Human).